The chain runs to 1071 residues: ATP-dependent helicase/deoxyribonuclease subunit B (1071 aa).

It belongs to the helicase family. AddB/RexB type 2 subfamily. In terms of assembly, heterodimer of AddA and RexB. Requires Mg(2+) as cofactor.

Its function is as follows. The heterodimer acts as both an ATP-dependent DNA helicase and an ATP-dependent, dual-direction single-stranded exonuclease. Recognizes the chi site generating a DNA molecule suitable for the initiation of homologous recombination. This subunit has 5' -&gt; 3' nuclease activity but not helicase activity. This chain is ATP-dependent helicase/deoxyribonuclease subunit B, found in Streptococcus pyogenes serotype M18 (strain MGAS8232).